A 237-amino-acid chain; its full sequence is Maternal B9.10 protein (237 aa).

Belongs to the BTG family.

The protein is Maternal B9.10 protein of Xenopus laevis (African clawed frog).